Reading from the N-terminus, the 337-residue chain is Cytoskeleton protein RodZ (337 aa).

Residues 1 to 111 lie on the Cytoplasmic side of the membrane; it reads MNTEATHDQN…LGKRRKKRDG (111 aa). The HTH cro/C1-type domain maps to 19-71; the sequence is LRNAREQLGLSQQAVAERLCLKVSTVRDIEEDKAPADLASTFLRGYIRSYARL. The H-T-H motif DNA-binding region spans 30 to 49; that stretch reads QQAVAERLCLKVSTVRDIEE. The chain crosses the membrane as a helical; Signal-anchor for type II membrane protein span at residues 112 to 132; the sequence is WLMTFTWLVLFVVIGLSGAWW. At 133-337 the chain is on the periplasmic side; sequence WQDHKAQQEE…TLNAEQSPAQ (205 aa). The segment covering 145 to 167 has biased composition (polar residues); sequence TMADQSSAELSSNSEQGQSVPLN. The interval 145–218 is disordered; that stretch reads TMADQSSAEL…AVVSPSQANV (74 aa). The span at 168–207 shows a compositional bias: low complexity; it reads TSTTTDPATTSTPPASVDTTATNTQTPAVTAPAPAVDPQQ. Residues 208–218 show a composition bias toward polar residues; it reads NAVVSPSQANV.

It belongs to the RodZ family.

It localises to the cell inner membrane. In terms of biological role, cytoskeletal protein that is involved in cell-shape control through regulation of the length of the long axis. In Shigella flexneri serotype 5b (strain 8401), this protein is Cytoskeleton protein RodZ.